Consider the following 1279-residue polypeptide: ATP-dependent helicase/nuclease subunit A (1279 aa).

The UvrD-like helicase ATP-binding domain maps to 4–499 (TKWTDEQRQA…VKLFKNFRSR (496 aa)). ATP is bound at residue 25–32 (AGAGAGKT). A UvrD-like helicase C-terminal domain is found at 526–853 (EEALKVGASY…RIMSIHKSKG (328 aa)).

Belongs to the helicase family. AddA subfamily. Heterodimer of AddA and AddB/RexB. Mg(2+) is required as a cofactor.

It carries out the reaction Couples ATP hydrolysis with the unwinding of duplex DNA by translocating in the 3'-5' direction.. The enzyme catalyses ATP + H2O = ADP + phosphate + H(+). The heterodimer acts as both an ATP-dependent DNA helicase and an ATP-dependent, dual-direction single-stranded exonuclease. Recognizes the chi site generating a DNA molecule suitable for the initiation of homologous recombination. The AddA nuclease domain is required for chi fragment generation; this subunit has the helicase and 3' -&gt; 5' nuclease activities. In Clostridium botulinum (strain 657 / Type Ba4), this protein is ATP-dependent helicase/nuclease subunit A.